The following is a 333-amino-acid chain: Oxidoreductase AN1596 (333 aa).

Belongs to the NmrA-type oxidoreductase family.

Its pathway is secondary metabolite biosynthesis; terpenoid biosynthesis. Oxidoreductase; part of the gene cluster that mediates the biosynthesis of the diterpene ent-pimara-8(14),15-diene (PD). Within the cluster, the HMG-CoA reductase AN1593 functions in the mevalonate pathway, which produces isoprenoid precursors. The geranylgeranyl pyrophosphate (GGPP) synthase AN1592 is needed in the formation of GGPP, the precursor for diterpenes. Lastly, the pimaradiene synthase pbcA performs the 2 cyclization steps that convert GGPP to ent-pimara-8(14),15-diene. The putative roles of the remaining cluster enzymes in ent-pimara-8(14),15-diene biosynthesis is unclear. The cytochrome P450 monooxygenase AN1598, the glutathione S-transferase AN1595, the oxidoreductases AN1596 and AN1597 probably function as decorative enzymes. It is possible that in biological conditions the compound is oxidized to ent-pimara-8(14),15-dien-19-oic acid, which is a bioactive diterpene compound predominant in many plant extracts. This Emericella nidulans (strain FGSC A4 / ATCC 38163 / CBS 112.46 / NRRL 194 / M139) (Aspergillus nidulans) protein is Oxidoreductase AN1596.